Consider the following 299-residue polypeptide: Glycine--tRNA ligase alpha subunit (299 aa).

It belongs to the class-II aminoacyl-tRNA synthetase family. As to quaternary structure, tetramer of two alpha and two beta subunits.

It is found in the cytoplasm. The catalysed reaction is tRNA(Gly) + glycine + ATP = glycyl-tRNA(Gly) + AMP + diphosphate. The protein is Glycine--tRNA ligase alpha subunit of Lactiplantibacillus plantarum (strain ATCC BAA-793 / NCIMB 8826 / WCFS1) (Lactobacillus plantarum).